The following is a 69-amino-acid chain: MARVTVEDCLEKVDNRFLLVMLASKRVKQLFKGAKPLIDNRAGNKNVVLALREIAAGKVNFEISGRKSR.

This sequence belongs to the RNA polymerase subunit omega family. The RNAP catalytic core consists of 2 alpha, 1 beta, 1 beta' and 1 omega subunit. When a sigma factor is associated with the core the holoenzyme is formed, which can initiate transcription.

It catalyses the reaction RNA(n) + a ribonucleoside 5'-triphosphate = RNA(n+1) + diphosphate. In terms of biological role, promotes RNA polymerase assembly. Latches the N- and C-terminal regions of the beta' subunit thereby facilitating its interaction with the beta and alpha subunits. This chain is DNA-directed RNA polymerase subunit omega, found in Geotalea uraniireducens (strain Rf4) (Geobacter uraniireducens).